A 529-amino-acid polypeptide reads, in one-letter code: HTH-type transcriptional activator Btr (529 aa).

Positions 182–201 (LAQLSQMAGISAKHYSESFK) form a DNA-binding region, H-T-H motif. The Fe/B12 periplasmic-binding domain maps to 268–528 (KIAAYGRGTM…QTVSLLSGDC (261 aa)).

Binds with high affinity to both apo-bacillibactin and iron-bacillibactin.

The protein resides in the cytoplasm. Its function is as follows. In iron-limited conditions, activates expression of the feuABCybbA operon, which encodes the bacillibactin uptake system. Acts by binding directly to a conserved direct repeat element upstream of the feuA promoter. Activity is increased in the presence of bacillibactin. The chain is HTH-type transcriptional activator Btr (btr) from Bacillus subtilis (strain 168).